Consider the following 907-residue polypeptide: Translation initiation factor IF-2 (907 aa).

The segment at 1–305 (MSEGNDQDQG…SLASVRRQRE (305 aa)) is disordered. The segment covering 62–80 (SGSGSSGGGRAGGRGGSGG) has biased composition (gly residues). 2 stretches are compositionally biased toward basic and acidic residues: residues 93–114 (RVLE…EQEK) and 122–158 (EEAR…ERRA). Residues 211–230 (PARPVTPSRPATPAATPQAP) are compositionally biased toward low complexity. 2 stretches are compositionally biased toward basic and acidic residues: residues 240 to 249 (RVGEAEDDRR) and 271 to 280 (KGGDSRRSGR). Residues 406–576 (PRPPVVTVMG…LLQAEMLDLR (171 aa)) form the tr-type G domain. Residues 415-422 (GHVDHGKT) are G1. 415-422 (GHVDHGKT) is a binding site for GTP. The tract at residues 440-444 (GITQH) is G2. The G3 stretch occupies residues 462 to 465 (DTPG). GTP-binding positions include 462–466 (DTPGH) and 516–519 (NKCD). The tract at residues 516–519 (NKCD) is G4. The tract at residues 552 to 554 (SAL) is G5.

It belongs to the TRAFAC class translation factor GTPase superfamily. Classic translation factor GTPase family. IF-2 subfamily.

The protein resides in the cytoplasm. Functionally, one of the essential components for the initiation of protein synthesis. Protects formylmethionyl-tRNA from spontaneous hydrolysis and promotes its binding to the 30S ribosomal subunits. Also involved in the hydrolysis of GTP during the formation of the 70S ribosomal complex. In Gluconacetobacter diazotrophicus (strain ATCC 49037 / DSM 5601 / CCUG 37298 / CIP 103539 / LMG 7603 / PAl5), this protein is Translation initiation factor IF-2.